A 342-amino-acid polypeptide reads, in one-letter code: AA9 family lytic polysaccharide monooxygenase H (342 aa).

Positions 1 to 19 are cleaved as a signal peptide; it reads MSKASALLAGLTGAALVAA. Positions 20 and 106 each coordinate Cu(2+). 2 disulfides stabilise this stretch: Cys75–Cys195 and Cys117–Cys121. 2 residues coordinate O2: His181 and Gln190. Tyr192 is a Cu(2+) binding site. A disordered region spans residues 263–308; that stretch reads ATVPGGGGANPTATTTAATSAAPSTTLRTTTTSAAQTTAPPSGDVQ. Low complexity predominate over residues 272 to 305; sequence NPTATTTAATSAAPSTTLRTTTTSAAQTTAPPSG. In terms of domain architecture, CBM1 spans 306–342; it reads DVQTKYGQCGGNGWTGPTVCAPGSSCSVLNEWYSQCL.

This sequence belongs to the polysaccharide monooxygenase AA9 family. Cu(2+) is required as a cofactor.

The protein localises to the secreted. It carries out the reaction [(1-&gt;4)-beta-D-glucosyl]n+m + reduced acceptor + O2 = 4-dehydro-beta-D-glucosyl-[(1-&gt;4)-beta-D-glucosyl]n-1 + [(1-&gt;4)-beta-D-glucosyl]m + acceptor + H2O.. Its activity is regulated as follows. The presence of lignin presents a significant source of antioxidants, which probably increase the activity by trapping liberated oxidized fragments. In terms of biological role, lytic polysaccharide monooxygenase (LPMO) that depolymerizes crystalline and amorphous polysaccharides via the oxidation of scissile alpha- or beta-(1-4)-glycosidic bonds, yielding C1 or C4 oxidation products. Catalysis by LPMOs requires the reduction of the active-site copper from Cu(II) to Cu(I) by a reducing agent and H(2)O(2) or O(2) as a cosubstrate. Hydrolyzes weakly barley beta-glucan, carboxymethyl cellulose, lichenan, wheat arabinoxylan and birchwood xylan. Stimulates the hydrolysis of lignocellulosic substrates (such as hydrothermal pretreated wheat straw or steam-pretreated spruce), when combined with other cellulolytic enzymes. This chain is AA9 family lytic polysaccharide monooxygenase H, found in Thermothelomyces thermophilus (strain ATCC 42464 / BCRC 31852 / DSM 1799) (Sporotrichum thermophile).